A 145-amino-acid polypeptide reads, in one-letter code: MSLSAAEADLVGKSWAPVYANKDANGDAFLLSLFEKFPNNANYFADFKGKSIADIKASPKLRDVSSRIFTRLNEFVNNAADAGKMSAMLSQFASEHVGFGVGSAQFENVRSMFPAFVASLSAPPADDAWNKLFGLIVAALKAAGK.

An N-acetylserine modification is found at Ser2. A Globin domain is found at 2 to 145; the sequence is SLSAAEADLV…IVAALKAAGK (144 aa). His96 provides a ligand contact to heme b.

It belongs to the globin family. In terms of assembly, monomer.

The protein is Globin of Aplysia kurodai (Kuroda's sea hare).